The following is a 993-amino-acid chain: NACHT, LRR and PYD domains-containing protein 14 (993 aa).

The NACHT domain occupies 81–403 (QTVVLQGAAG…FYLLRENLEE (323 aa)). 87–94 (GAAGIGKT) contributes to the ATP binding site. LRR repeat units lie at residues 636–657 (DLKETDLGVNGLKTLCEALKCK), 660–680 (KLRVLRLASCDLNVARCQKLS), 688–708 (SLVFLNLSLNNLSNDGVKSLC), 717–738 (SLERLALASCGLTKAGCKVLSS), 745–765 (RLTHLCLSDNVLEDEGIKLLS), 774–795 (TLQSLVLRSCSFTPIGSEHLST), 802–822 (SLVHLDLGQNKLADNGVKLLC), 831–852 (NLQELELMSCVLTSKACGDLAS), and 859–879 (NLWSLDLGHNILDDAGLNILC).

It belongs to the NLRP family. Detected in adult ovary and testis. Detected in oocytes and in germ cell elements in seminiferous tubules in adult testis (at protein level).

The protein resides in the cytoplasm. Functionally, may be involved in inflammation and spermatogenesis. This chain is NACHT, LRR and PYD domains-containing protein 14 (Nlrp14), found in Mus musculus (Mouse).